The sequence spans 1392 residues: ATP-dependent helicase/nuclease subunit A (1392 aa).

A UvrD-like helicase ATP-binding domain is found at asparagine 3–arginine 489. Residue alanine 24 to threonine 31 coordinates ATP. Disordered stretches follow at residues arginine 291–aspartate 319, lysine 555–alanine 594, and glycine 1051–lysine 1126. Composition is skewed to basic and acidic residues over residues glutamate 305 to aspartate 319 and serine 567 to glutamate 583. The region spanning arginine 556–glycine 886 is the UvrD-like helicase C-terminal domain. Positions serine 584 to alanine 594 are enriched in acidic residues. Basic and acidic residues predominate over residues alanine 1088–leucine 1113.

It belongs to the helicase family. AddA subfamily. Heterodimer of AddA and AddB/RexB. Mg(2+) is required as a cofactor.

The catalysed reaction is Couples ATP hydrolysis with the unwinding of duplex DNA by translocating in the 3'-5' direction.. It carries out the reaction ATP + H2O = ADP + phosphate + H(+). Functionally, the heterodimer acts as both an ATP-dependent DNA helicase and an ATP-dependent, dual-direction single-stranded exonuclease. Recognizes the chi site generating a DNA molecule suitable for the initiation of homologous recombination. The AddA nuclease domain is required for chi fragment generation; this subunit has the helicase and 3' -&gt; 5' nuclease activities. This Desulfitobacterium hafniense (strain DSM 10664 / DCB-2) protein is ATP-dependent helicase/nuclease subunit A.